A 469-amino-acid chain; its full sequence is MSKDMSYSGVMSRRNEIMKNAIGIDYTTFESGSLSFDYEKMMRETGYTLEEMQKIQYSTGVGRTPVLELRNITALARKYAAPGKGARIFIKDEAGNPSGSFKARRAANAVYHAKKLGYKGVIAATSGNYGAAVASQAAMAGLKCIIVQECYDSKGVGQPEIIEKARKCEALGAEVVQLSVGPELFYKFLSLLEETGYFNASLYTPFGIAGVETLGYELAVEFREAYGKDPDVVVCSNAGGGNLTGTARGLIKAGAQSEVVAASVNLQGLHMASDTQFNKKSFTTSHTGFGMPFATWPDRSDVPRSAARPLRYMDRYVTVNQGEVFYITETLASLEGLEKGPAGNTALAAAFSLAQEMDKDQIIVVQETEYTGAGKHIQPQLAFARDNGIDIKFGNPKEEVAGINIILPENPGMIKAVDHEMNKLRKSLIKNALANYPDAKLDDSDIDFLVKETKSDTEFVKATIKEIKG.

An N6-(pyridoxal phosphate)lysine modification is found at Lys-102. Pyridoxal 5'-phosphate-binding positions include Asn-128 and 238-242 (AGGGN).

It belongs to the threonine synthase family. Heterodimer with OrtA. It depends on pyridoxal 5'-phosphate as a cofactor.

It carries out the reaction D-alanine + acetyl-CoA = (2R)-2-amino-4-oxopentanoate + CoA. Its activity is regulated as follows. Completely inhibited by p-chloromercuribenzoate (p-ClHgBzO) and acetyl-CoA, and partially inhibited by N-ethylmaleimide. Its function is as follows. Involved in the ornithine fermentation pathway. Catalyzes the thiolytic cleavage of 2-amino-4-ketopentanoate (AKP) with coenzyme A (CoA) to form acetyl-CoA and alanine. It is strictly specific for AKP. This Acetoanaerobium sticklandii (strain ATCC 12662 / DSM 519 / JCM 1433 / CCUG 9281 / NCIMB 10654 / HF) (Clostridium sticklandii) protein is 2-amino-4-ketopentanoate thiolase beta subunit.